A 344-amino-acid polypeptide reads, in one-letter code: Phenylalanine--tRNA ligase alpha subunit (344 aa).

Residue Glu-261 participates in Mg(2+) binding.

Belongs to the class-II aminoacyl-tRNA synthetase family. Phe-tRNA synthetase alpha subunit type 1 subfamily. Tetramer of two alpha and two beta subunits. Mg(2+) serves as cofactor.

It is found in the cytoplasm. It catalyses the reaction tRNA(Phe) + L-phenylalanine + ATP = L-phenylalanyl-tRNA(Phe) + AMP + diphosphate + H(+). This Ehrlichia ruminantium (strain Gardel) protein is Phenylalanine--tRNA ligase alpha subunit.